The chain runs to 80 residues: Putative membrane protein insertion efficiency factor (80 aa).

Residues Lys-61 to Glu-80 are disordered. Residues Thr-62–Glu-80 show a composition bias toward basic and acidic residues.

Belongs to the UPF0161 family.

The protein resides in the cell membrane. Functionally, could be involved in insertion of integral membrane proteins into the membrane. The sequence is that of Putative membrane protein insertion efficiency factor from Streptococcus pneumoniae serotype 19F (strain G54).